An 86-amino-acid chain; its full sequence is Large ribosomal subunit protein uL23 (86 aa).

This sequence belongs to the universal ribosomal protein uL23 family. In terms of assembly, part of the 50S ribosomal subunit. Contacts protein L29.

Functionally, binds to 23S rRNA. One of the proteins that surrounds the polypeptide exit tunnel on the outside of the ribosome. The protein is Large ribosomal subunit protein uL23 of Methanococcus maripaludis (strain C5 / ATCC BAA-1333).